Here is a 304-residue protein sequence, read N- to C-terminus: Probable actin-related protein 2/3 complex subunit 2 (304 aa).

This sequence belongs to the ARPC2 family. Component of the Arp2/3 complex.

The protein resides in the cytoplasm. It is found in the cytoskeleton. Functions as actin-binding component of the Arp2/3 complex which is involved in regulation of actin polymerization and together with an activating nucleation-promoting factor (NPF) mediates the formation of branched actin networks. Seems to contact the mother actin filament. This chain is Probable actin-related protein 2/3 complex subunit 2 (Arc-p34), found in Anopheles gambiae (African malaria mosquito).